The primary structure comprises 418 residues: UDP-glucuronic acid decarboxylase 1 (418 aa).

The Cytoplasmic portion of the chain corresponds to 1 to 17 (MMRMSWMVTVINRRMMK). A helical; Signal-anchor for type II membrane protein membrane pass occupies residues 18–38 (ILIALALIAYIASVWGTYANM). Residues 39-418 (RSIQEHGEMK…RMKKGRPRHN (380 aa)) lie on the Lumenal side of the membrane. Residues Gly96, Phe97, Val98, Asp117, Asn118, Phe120, Thr121, Gly122, Asp142, and Val143 each coordinate NAD(+). UDP-alpha-D-glucuronate-binding residues include Leu147 and Tyr148. 2 residues coordinate NAD(+): Leu157 and Ser159. Lys175 provides a ligand contact to UDP-alpha-D-glucuronate. Thr176 is a binding site for NAD(+). 4 residues coordinate UDP-alpha-D-glucuronate: Asn183, Gly186, Lys189, and Arg190. NAD(+) contacts are provided by Ala198, Tyr229, and Lys233. Tyr229 (proton acceptor) is an active-site residue. Residues Tyr243, Gln246, and Glu247 each coordinate UDP-alpha-D-glucuronate. NAD(+)-binding residues include Thr259, His265, and Arg270. 2 N-linked (GlcNAc...) asparagine glycosylation sites follow: Asn314 and Asn383. The segment at 397 to 418 (ANNQYIPKPKAARMKKGRPRHN) is disordered. Over residues 406 to 418 (KAARMKKGRPRHN) the composition is skewed to basic residues.

Belongs to the NAD(P)-dependent epimerase/dehydratase family. UDP-glucuronic acid decarboxylase subfamily. In terms of assembly, homodimer and homotetramer. NAD(+) serves as cofactor.

It localises to the golgi apparatus. Its subcellular location is the golgi stack membrane. It catalyses the reaction UDP-alpha-D-glucuronate + H(+) = UDP-alpha-D-xylose + CO2. It participates in nucleotide-sugar biosynthesis; UDP-alpha-D-xylose biosynthesis; UDP-alpha-D-xylose from UDP-alpha-D-glucuronate: step 1/1. Its function is as follows. Catalyzes the NAD-dependent decarboxylation of UDP-glucuronic acid to UDP-xylose. Necessary for the biosynthesis of the core tetrasaccharide in glycosaminoglycan biosynthesis. Essential during embryogenesis for craniofacial development. This is UDP-glucuronic acid decarboxylase 1 from Danio rerio (Zebrafish).